Here is a 462-residue protein sequence, read N- to C-terminus: Cysteine proteinase RD21A (462 aa).

An N-terminal signal peptide occupies residues 1–21 (MGFLKPTMAILFLAMVAVSSA). The propeptide at 22–136 (VDMSIISYDE…LRYEARVGDE (115 aa)) is activation peptide. The N-linked (GlcNAc...) asparagine glycan is linked to Asn-90. Disulfide bonds link Cys-158–Cys-200, Cys-192–Cys-233, Cys-291–Cys-342, Cys-375–Cys-387, and Cys-381–Cys-402. Residue Cys-161 is part of the active site. Residues His-297 and Asn-317 contribute to the active site. A propeptide spans 353–462 (KNGENPPNPG…FWSQGRKNIA (110 aa)) (removed in mature form). N-linked (GlcNAc...) asparagine glycosylation occurs at Asn-414.

This sequence belongs to the peptidase C1 family. As to quaternary structure, interacts with SERPIN1. Interacts with PRN2. Interacts with WSCP. Interacts with TZF4, TZF5 and TZF6.

Its subcellular location is the vacuole. The protein resides in the golgi apparatus. It localises to the cytoplasm. The protein localises to the stress granule. It is found in the P-body. With respect to regulation, inhibited by the cysteine protease inhibitor E64 (L-trans-epoxysuccinyl-leucylamide-(4-guanido)-butane). Its function is as follows. Cysteine protease that plays a role in immunity, senescence, and biotic and abiotic stresses. Involved in immunity against the necrotrophic fungal pathogen Botrytis cinerea. Involved in elicitor-stimulated programmed cell death (PCD). During infection by the necrotrophic fungal pathogen Botrytis cinerea, functions as a PCD-promoting protease that is released from the ER body or vacuole to the cytoplasm. Accumulates in endoplasmic reticulum-derived bodies in epidermal cells and may participate in cell death in stressed or injured cells. Involved in water stress-induced cell death through its protease activity that is released to the cytoplasm after vacuolar collapse. Possesses protease activity in vitro and is involved in cell death in the transmitting tract and septum epidermis during flower development. Possesses peptide ligase activity. Can ligate peptides to unmodified N-termini of acceptor proteins. Probably ligates through a thioester intermediate. The sequence is that of Cysteine proteinase RD21A from Arabidopsis thaliana (Mouse-ear cress).